Reading from the N-terminus, the 402-residue chain is CCA-adding enzyme (402 aa).

ATP contacts are provided by G32 and R35. 2 residues coordinate CTP: G32 and R35. The Mg(2+) site is built by D45 and D47. Positions 119, 162, 165, 168, and 171 each coordinate ATP. 5 residues coordinate CTP: R119, D162, R165, R168, and R171.

The protein belongs to the tRNA nucleotidyltransferase/poly(A) polymerase family. Bacterial CCA-adding enzyme type 3 subfamily. Homodimer. Mg(2+) is required as a cofactor.

It catalyses the reaction a tRNA precursor + 2 CTP + ATP = a tRNA with a 3' CCA end + 3 diphosphate. The catalysed reaction is a tRNA with a 3' CCA end + 2 CTP + ATP = a tRNA with a 3' CCACCA end + 3 diphosphate. Catalyzes the addition and repair of the essential 3'-terminal CCA sequence in tRNAs without using a nucleic acid template. Adds these three nucleotides in the order of C, C, and A to the tRNA nucleotide-73, using CTP and ATP as substrates and producing inorganic pyrophosphate. tRNA 3'-terminal CCA addition is required both for tRNA processing and repair. Also involved in tRNA surveillance by mediating tandem CCA addition to generate a CCACCA at the 3' terminus of unstable tRNAs. While stable tRNAs receive only 3'-terminal CCA, unstable tRNAs are marked with CCACCA and rapidly degraded. The sequence is that of CCA-adding enzyme from Lactococcus lactis subsp. cremoris (strain SK11).